Consider the following 530-residue polypeptide: Type 2 DNA topoisomerase 6 subunit B (530 aa).

ATP is bound by residues Asn42, Asp76, 97 to 98 (SK), 106 to 113 (GMYGLGVK), and Lys427.

It belongs to the TOP6B family. In terms of assembly, homodimer. Heterotetramer of two Top6A and two Top6B chains.

It catalyses the reaction ATP-dependent breakage, passage and rejoining of double-stranded DNA.. Relaxes both positive and negative superturns and exhibits a strong decatenase activity. In Saccharolobus islandicus (strain M.16.4 / Kamchatka #3) (Sulfolobus islandicus), this protein is Type 2 DNA topoisomerase 6 subunit B.